The chain runs to 309 residues: Pyridoxal kinase (309 aa).

Thr2 carries the N-acetylthreonine; in Pyridoxal kinase, N-terminally processed modification. Ser23 and Thr58 together coordinate pyridoxal. Residue Thr58 coordinates pyridoxal 5'-phosphate. Asp124 is an ATP binding site. Residue Asp124 participates in Na(+) binding. Residue Asp129 coordinates Mg(2+). Position 155 (Thr155) interacts with Na(+). ATP contacts are provided by residues 157 to 160, 193 to 194, 225 to 227, and Thr232; these read NQFE, TS, and IPA. Na(+) is bound at residue Thr193. 233–234 contacts pyridoxal 5'-phosphate; the sequence is GD. The active-site Proton acceptor is Asp234.

This sequence belongs to the pyridoxine kinase family. As to quaternary structure, homodimer. Requires Zn(2+) as cofactor. Expressed ubiquitously in leaves, stems, roots, flowers and siliques. Present in root hairs and other tip-growing cells such as papillar cells on the top of stigma.

The catalysed reaction is pyridoxal + ATP = pyridoxal 5'-phosphate + ADP + H(+). It participates in cofactor metabolism; pyridoxal 5'-phosphate salvage; pyridoxal 5'-phosphate from pyridoxal: step 1/1. Its function is as follows. Catalyzes the transfer of a phosphate group from ATP to the 5-hydroxylmethyl group of pyridoxal to form the biologically active pyridoxal phosphate, an active form of vitamin B6. Required for Na(+) and K(+) homeostasis and for salt tolerance. Involved in root hair development, both for initiation and tip growth. The protein is Pyridoxal kinase of Arabidopsis thaliana (Mouse-ear cress).